Reading from the N-terminus, the 208-residue chain is uncharacterized protein (208 aa).

This is an uncharacterized protein from Synechococcus elongatus (strain ATCC 33912 / PCC 7942 / FACHB-805) (Anacystis nidulans R2).